A 690-amino-acid polypeptide reads, in one-letter code: Protein O-mannosyl-transferase F38B6.6 (690 aa).

The tract at residues 1-24 (MKKHLHHKVSGSCDPGDRSPKEKG) is disordered. At 1 to 32 (MKKHLHHKVSGSCDPGDRSPKEKGRSQGIRNL) the chain is on the cytoplasmic side. Positions 15–24 (PGDRSPKEKG) are enriched in basic and acidic residues. A helical membrane pass occupies residues 33–53 (LILISLSIIPYLSCLGGDFVF). The Extracellular segment spans residues 54 to 110 (DDAESIVNNPIVNGKDPLLQIFSRDFWGRSISSSNSHKSYRPVTTFTFWLNYKLHET). A helical membrane pass occupies residues 111 to 131 (STLGYHVVNIICHTVATLVFY). Topologically, residues 132–138 (KLGKQLE) are cytoplasmic. Residues 139-159 (HIFDFFNIAFSASILFAVHPV) form a helical membrane-spanning segment. Residues 160 to 166 (HTEAVAN) are Extracellular-facing. Asparagine 166 carries an N-linked (GlcNAc...) asparagine glycan. Residues 167–187 (ITGRAELLMTIFSLAALILHV) traverse the membrane as a helical segment. The Cytoplasmic portion of the chain corresponds to 188-234 (KNREINCKFVLLVILSTLSKEQGLMTIPIAICIDFLAHRSCRSNFVR). A helical transmembrane segment spans residues 235 to 255 (MICLLVAIGFLRMMVNGFEAA). Residues 256–273 (KFTKLDNPTAFLNSKFYR) lie on the Extracellular side of the membrane. The chain crosses the membrane as a helical span at residues 274-294 (MINYTYIWLYHAYLLVIPVNL). The Cytoplasmic portion of the chain corresponds to 295-307 (CFDYSMGCISSIT). Residues 308–328 (TMWDLRALSPVLIFTIVIIGV) form a helical membrane-spanning segment. The Extracellular segment spans residues 329-341 (KFQNECRAFTLSS). Residues 342 to 362 (LMGIISFLPASNIFFTVGFSI) traverse the membrane as a helical segment. The Cytoplasmic portion of the chain corresponds to 363-365 (AER). The chain crosses the membrane as a helical span at residues 366–386 (VLYLPSAGFCLLCAIIFKKLS). At 387 to 690 (VHFKNADVLS…EHNCYNSTLP (304 aa)) the chain is on the extracellular side. TPR repeat units lie at residues 398–431 (TLILLLISKTYRRSGEWKTELSLYSSGLSVCPTN), 432–465 (AKIHYNLGKVLGDNGLTKDAEKNYWNAIKLDPSY), 466–499 (EQALNNLGNLLEKSGDSKTAESLLARAVTLRPSF), 500–533 (AVAWMNLGISQMNLKKYYEAEKSLKNSLLIRPNS), and 534–567 (AHCLFNLGVLYQRTNRDEMAMSAWKNATRIDPSH). N-linked (GlcNAc...) asparagine glycans are attached at residues asparagine 559, asparagine 600, and asparagine 617. TPR repeat units lie at residues 602–635 (SRVHMQIGSCHAKHSNFTAAENHIKSAIDLNPTS) and 636–669 (VLFHANLGILYQRMSRHKEAESQYRIVLALDSKN). N-linked (GlcNAc...) asparagine glycosylation is present at asparagine 686.

The protein belongs to the TMTC family.

It is found in the membrane. The protein resides in the endoplasmic reticulum. It carries out the reaction a di-trans,poly-cis-dolichyl beta-D-mannosyl phosphate + L-seryl-[protein] = 3-O-(alpha-D-mannosyl)-L-seryl-[protein] + a di-trans,poly-cis-dolichyl phosphate + H(+). The catalysed reaction is a di-trans,poly-cis-dolichyl beta-D-mannosyl phosphate + L-threonyl-[protein] = 3-O-(alpha-D-mannosyl)-L-threonyl-[protein] + a di-trans,poly-cis-dolichyl phosphate + H(+). It participates in protein modification; protein glycosylation. In terms of biological role, transfers mannosyl residues to the hydroxyl group of serine or threonine residues. The polypeptide is Protein O-mannosyl-transferase F38B6.6 (Caenorhabditis elegans).